Here is a 301-residue protein sequence, read N- to C-terminus: tRNA pseudouridine synthase B (301 aa).

Aspartate 38 acts as the Nucleophile in catalysis.

The protein belongs to the pseudouridine synthase TruB family. Type 1 subfamily.

The enzyme catalyses uridine(55) in tRNA = pseudouridine(55) in tRNA. In terms of biological role, responsible for synthesis of pseudouridine from uracil-55 in the psi GC loop of transfer RNAs. The sequence is that of tRNA pseudouridine synthase B from Clostridioides difficile (strain 630) (Peptoclostridium difficile).